A 376-amino-acid polypeptide reads, in one-letter code: E3 ubiquitin-protein ligase RNF34 (376 aa).

Residues Glu-56–Glu-107 form an FYVE-type zinc finger. An SAP 1 domain is found at Leu-115–Thr-134. The residue at position 169 (Ser-169) is a Phosphoserine. Residues Ile-216–Arg-256 form a disordered region. The segment covering Thr-221–Gln-246 has biased composition (acidic residues). Phosphoserine is present on residues Ser-258 and Ser-260. The region spanning Val-268–Arg-282 is the SAP 2 domain. The segment at Cys-329–Arg-364 adopts an RING-type zinc-finger fold.

As to quaternary structure, interacts with CASP8 and CASP10. Interacts with p53/TP53; involved in p53/TP53 ubiquitination. Interacts (via RING-type zinc finger) with MDM2; the interaction stabilizes MDM2. Interacts (via RING-type zinc finger) with PPARGC1A. Interacts with NOD1. Autoubiquitinated (in vitro). Post-translationally, proteolytically cleaved by caspases upon induction of apoptosis by TNF.

It localises to the cell membrane. Its subcellular location is the endomembrane system. The protein resides in the nucleus. It is found in the nucleus speckle. The protein localises to the cytoplasm. It localises to the cytosol. The catalysed reaction is S-ubiquitinyl-[E2 ubiquitin-conjugating enzyme]-L-cysteine + [acceptor protein]-L-lysine = [E2 ubiquitin-conjugating enzyme]-L-cysteine + N(6)-ubiquitinyl-[acceptor protein]-L-lysine.. Its pathway is protein modification; protein ubiquitination. Its function is as follows. E3 ubiquitin-protein ligase that regulates several biological processes through the ubiquitin-mediated proteasomal degradation of various target proteins. Ubiquitinates the caspases CASP8 and CASP10, promoting their proteasomal degradation, to negatively regulate cell death downstream of death domain receptors in the extrinsic pathway of apoptosis. May mediate 'Lys-48'-linked polyubiquitination of RIPK1 and its subsequent proteasomal degradation thereby indirectly regulating the tumor necrosis factor-mediated signaling pathway. Negatively regulates p53/TP53 through its direct ubiquitination and targeting to proteasomal degradation. Indirectly, may also negatively regulate p53/TP53 through ubiquitination and degradation of SFN. Mediates PPARGC1A proteasomal degradation probably through ubiquitination thereby indirectly regulating the metabolism of brown fat cells. Possibly involved in innate immunity, through 'Lys-48'-linked polyubiquitination of NOD1 and its subsequent proteasomal degradation. The protein is E3 ubiquitin-protein ligase RNF34 of Mus musculus (Mouse).